We begin with the raw amino-acid sequence, 198 residues long: V-type proton ATPase subunit E (198 aa).

Belongs to the V-ATPase E subunit family.

Functionally, produces ATP from ADP in the presence of a proton gradient across the membrane. The polypeptide is V-type proton ATPase subunit E (Borrelia turicatae (strain 91E135)).